Reading from the N-terminus, the 433-residue chain is Signal recognition particle 54 kDa protein (433 aa).

Residues 106–113, 186–190, and 244–247 each bind GTP; these read GVEGSGKT, DTAGR, and TKMD.

The protein belongs to the GTP-binding SRP family. SRP54 subfamily. In terms of assembly, part of the signal recognition particle protein translocation system, which is composed of SRP and FtsY. Archaeal SRP consists of a 7S RNA molecule of 300 nucleotides and two protein subunits: SRP54 and SRP19.

The protein localises to the cytoplasm. It catalyses the reaction GTP + H2O = GDP + phosphate + H(+). Its function is as follows. Involved in targeting and insertion of nascent membrane proteins into the cytoplasmic membrane. Binds to the hydrophobic signal sequence of the ribosome-nascent chain (RNC) as it emerges from the ribosomes. The SRP-RNC complex is then targeted to the cytoplasmic membrane where it interacts with the SRP receptor FtsY. In Pyrobaculum aerophilum (strain ATCC 51768 / DSM 7523 / JCM 9630 / CIP 104966 / NBRC 100827 / IM2), this protein is Signal recognition particle 54 kDa protein.